The chain runs to 713 residues: Glycine--tRNA ligase beta subunit (713 aa).

The protein belongs to the class-II aminoacyl-tRNA synthetase family. As to quaternary structure, tetramer of two alpha and two beta subunits.

The protein localises to the cytoplasm. The catalysed reaction is tRNA(Gly) + glycine + ATP = glycyl-tRNA(Gly) + AMP + diphosphate. This Leptothrix cholodnii (strain ATCC 51168 / LMG 8142 / SP-6) (Leptothrix discophora (strain SP-6)) protein is Glycine--tRNA ligase beta subunit.